A 603-amino-acid chain; its full sequence is Adenine deaminase (603 aa).

This sequence belongs to the metallo-dependent hydrolases superfamily. Adenine deaminase family. In terms of assembly, homodimer. Mn(2+) is required as a cofactor.

It carries out the reaction adenine + H2O + H(+) = hypoxanthine + NH4(+). The polypeptide is Adenine deaminase (Klebsiella pneumoniae subsp. pneumoniae (strain ATCC 700721 / MGH 78578)).